A 69-amino-acid chain; its full sequence is Protein transport protein Sec61 subunit gamma (69 aa).

The Cytoplasmic portion of the chain corresponds to 1 to 40 (MDILEETAAPLKDFAKNSIRLFKKCTKPDAQEFQKIALAT). A helical membrane pass occupies residues 41-61 (LIGFAIMGFIGFFVKLIHIPI). The Extracellular segment spans residues 62–69 (NNILVGGV).

Belongs to the SecE/SEC61-gamma family. Heterotrimeric complex composed of SEC61-alpha, SEC61-beta and SEC61-gamma.

It localises to the endoplasmic reticulum membrane. Necessary for protein translocation in the endoplasmic reticulum. This is Protein transport protein Sec61 subunit gamma (sec61g) from Dictyostelium discoideum (Social amoeba).